Reading from the N-terminus, the 716-residue chain is Calpain clp-4 (716 aa).

The tract at residues 31–53 (DDDDKQEAPVAVSKAPKGKGSNH) is disordered. A Calpain catalytic domain is found at 240–536 (LFEDPEFPAT…FTQMEVCNLT (297 aa)). Active-site residues include Cys295, His452, and Asn476.

Belongs to the peptidase C2 family.

Functionally, calcium-regulated non-lysosomal thiol-protease which catalyzes limited proteolysis of substrates. Promotes starvation-induced muscle atrophy. This is Calpain clp-4 from Caenorhabditis elegans.